The chain runs to 255 residues: Thiazole synthase (255 aa).

Residue K96 is the Schiff-base intermediate with DXP of the active site. Residues G157, 183–184, and 205–206 contribute to the 1-deoxy-D-xylulose 5-phosphate site; these read AG and NT.

This sequence belongs to the ThiG family. In terms of assembly, homotetramer. Forms heterodimers with either ThiH or ThiS.

Its subcellular location is the cytoplasm. It carries out the reaction [ThiS sulfur-carrier protein]-C-terminal-Gly-aminoethanethioate + 2-iminoacetate + 1-deoxy-D-xylulose 5-phosphate = [ThiS sulfur-carrier protein]-C-terminal Gly-Gly + 2-[(2R,5Z)-2-carboxy-4-methylthiazol-5(2H)-ylidene]ethyl phosphate + 2 H2O + H(+). It functions in the pathway cofactor biosynthesis; thiamine diphosphate biosynthesis. In terms of biological role, catalyzes the rearrangement of 1-deoxy-D-xylulose 5-phosphate (DXP) to produce the thiazole phosphate moiety of thiamine. Sulfur is provided by the thiocarboxylate moiety of the carrier protein ThiS. In vitro, sulfur can be provided by H(2)S. The polypeptide is Thiazole synthase (Staphylococcus epidermidis (strain ATCC 35984 / DSM 28319 / BCRC 17069 / CCUG 31568 / BM 3577 / RP62A)).